Consider the following 72-residue polypeptide: MAKEEMLEFPGVVKELLPNATFRVELENGHEIIAHMAGKMRKNRIRVLAGDKVQVEMNTYDLTKGRINYRFK.

An S1-like domain is found at 1–72; it reads MAKEEMLEFP…TKGRINYRFK (72 aa).

It belongs to the IF-1 family. Component of the 30S ribosomal translation pre-initiation complex which assembles on the 30S ribosome in the order IF-2 and IF-3, IF-1 and N-formylmethionyl-tRNA(fMet); mRNA recruitment can occur at any time during PIC assembly.

It is found in the cytoplasm. In terms of biological role, one of the essential components for the initiation of protein synthesis. Stabilizes the binding of IF-2 and IF-3 on the 30S subunit to which N-formylmethionyl-tRNA(fMet) subsequently binds. Helps modulate mRNA selection, yielding the 30S pre-initiation complex (PIC). Upon addition of the 50S ribosomal subunit IF-1, IF-2 and IF-3 are released leaving the mature 70S translation initiation complex. The chain is Translation initiation factor IF-1 from Paracoccus denitrificans (strain Pd 1222).